We begin with the raw amino-acid sequence, 155 residues long: Protein-export protein SecB (155 aa).

It belongs to the SecB family. In terms of assembly, homotetramer, a dimer of dimers. One homotetramer interacts with 1 SecA dimer.

It localises to the cytoplasm. Functionally, one of the proteins required for the normal export of preproteins out of the cell cytoplasm. It is a molecular chaperone that binds to a subset of precursor proteins, maintaining them in a translocation-competent state. It also specifically binds to its receptor SecA. The polypeptide is Protein-export protein SecB (Vibrio vulnificus (strain CMCP6)).